Here is a 287-residue protein sequence, read N- to C-terminus: Cell wall protein PIR5 (287 aa).

An N-terminal signal peptide occupies residues 1–21 (MHYKKAFLASLLSSIALTAYA). The propeptide occupies 22–62 (PPEPWATLTPSSKMDGGTTEYRTSFGLAVIPFTVTESKVKR). 4 PIR1/2/3 repeats span residues 62-80 (RNVISQINDGQVQVTTQKL), 81-99 (PHPVSQIGDGQIQVTTQKV), 104-122 (SHIVSQIGDGQLQITTAKN), and 144-162 (ATAVSQIHDGQVQVTISSA).

This sequence belongs to the PIR protein family. Post-translationally, covalently linked to beta-1,3-glucan of the inner cell wall layer via an alkali-sensitive ester linkage between the gamma-carboxyl group of glutamic acids, arising from specific glutamines within the PIR1/2/3 repeats, and hydroxyl groups of glucoses of beta-1,3-glucan chains.

It is found in the secreted. It localises to the cell wall. Functionally, component of the outer cell wall layer. May be involved in meiosis and sporulation. This is Cell wall protein PIR5 (PIR5) from Saccharomyces cerevisiae (strain YJM789) (Baker's yeast).